Here is a 238-residue protein sequence, read N- to C-terminus: Probable rhamnogalacturonate lyase B (238 aa).

The N-terminal stretch at 1–19 (MRLRTSLGVASACASVASA) is a signal peptide. Asparagine 27, asparagine 110, and asparagine 143 each carry an N-linked (GlcNAc...) asparagine glycan.

It belongs to the polysaccharide lyase 4 family.

The protein localises to the secreted. The catalysed reaction is Endotype eliminative cleavage of L-alpha-rhamnopyranosyl-(1-&gt;4)-alpha-D-galactopyranosyluronic acid bonds of rhamnogalacturonan I domains in ramified hairy regions of pectin leaving L-rhamnopyranose at the reducing end and 4-deoxy-4,5-unsaturated D-galactopyranosyluronic acid at the non-reducing end.. In terms of biological role, pectinolytic enzymes consist of four classes of enzymes: pectin lyase, polygalacturonase, pectin methylesterase and rhamnogalacturonase. Degrades the rhamnogalacturonan I (RG-I) backbone of pectin. In Aspergillus oryzae (strain ATCC 42149 / RIB 40) (Yellow koji mold), this protein is Probable rhamnogalacturonate lyase B (rglB).